Reading from the N-terminus, the 139-residue chain is Hydrogenase maturation factor HypA (139 aa).

A Ni(2+)-binding site is contributed by His-2. Zn(2+) is bound by residues Cys-73, Cys-76, Cys-110, and Cys-113.

Belongs to the HypA/HybF family.

Its function is as follows. Involved in the maturation of [NiFe] hydrogenases. Required for nickel insertion into the metal center of the hydrogenase. The sequence is that of Hydrogenase maturation factor HypA from Pyrococcus abyssi (strain GE5 / Orsay).